The sequence spans 865 residues: Aconitate hydratase B (865 aa).

Substrate contacts are provided by residues arginine 191, 244-246, 414-416, and serine 498; these read SSR and QDT. 3 residues coordinate [4Fe-4S] cluster: cysteine 710, cysteine 769, and cysteine 772. Substrate contacts are provided by arginine 791 and arginine 796.

This sequence belongs to the aconitase/IPM isomerase family. In terms of assembly, monomer. AcnB can also form a homodimer. The monomer-homodimer transition is dependent on iron availability and the carboxymethylation of C-273 inhibits the dimer formation. Requires [4Fe-4S] cluster as cofactor.

It catalyses the reaction citrate = D-threo-isocitrate. The enzyme catalyses (2S,3R)-3-hydroxybutane-1,2,3-tricarboxylate = 2-methyl-cis-aconitate + H2O. Its pathway is organic acid metabolism; propanoate degradation. The protein operates within carbohydrate metabolism; tricarboxylic acid cycle; isocitrate from oxaloacetate: step 2/2. Involved in the catabolism of short chain fatty acids (SCFA) via the tricarboxylic acid (TCA)(acetyl degradation route) and the 2-methylcitrate cycle I (propionate degradation route). Catalyzes the reversible isomerization of citrate to isocitrate via cis-aconitate. Also catalyzes the hydration of 2-methyl-cis-aconitate to yield (2R,3S)-2-methylisocitrate. The apo form of AcnB functions as a RNA-binding regulatory protein. During oxidative stress inactive AcnB apo-enzyme without iron sulfur clusters binds the acnB mRNA 3' UTRs (untranslated regions), stabilizes acnB mRNA and increases AcnB synthesis, thus mediating a post-transcriptional positive autoregulatory switch. AcnB also decreases the stability of the sodA transcript. The polypeptide is Aconitate hydratase B (Escherichia coli (strain K12)).